The following is a 448-amino-acid chain: Tubulin beta-2 chain (448 aa).

GTP is bound by residues glutamine 11, glutamate 69, serine 138, glycine 142, threonine 143, glycine 144, asparagine 204, and asparagine 226. Glutamate 69 lines the Mg(2+) pocket. The tract at residues 421 to 448 is disordered; that stretch reads EYQQYQDATADEDGEYEDELDGQEEEDM. Acidic residues predominate over residues 429 to 448; it reads TADEDGEYEDELDGQEEEDM.

It belongs to the tubulin family. As to quaternary structure, dimer of alpha and beta chains. A typical microtubule is a hollow water-filled tube with an outer diameter of 25 nm and an inner diameter of 15 nM. Alpha-beta heterodimers associate head-to-tail to form protofilaments running lengthwise along the microtubule wall with the beta-tubulin subunit facing the microtubule plus end conferring a structural polarity. Microtubules usually have 13 protofilaments but different protofilament numbers can be found in some organisms and specialized cells. The cofactor is Mg(2+).

It localises to the cytoplasm. The protein localises to the cytoskeleton. Tubulin is the major constituent of microtubules, a cylinder consisting of laterally associated linear protofilaments composed of alpha- and beta-tubulin heterodimers. Microtubules grow by the addition of GTP-tubulin dimers to the microtubule end, where a stabilizing cap forms. Below the cap, tubulin dimers are in GDP-bound state, owing to GTPase activity of alpha-tubulin. The sequence is that of Tubulin beta-2 chain (TUBB2) from Eleusine indica (Goosegrass).